We begin with the raw amino-acid sequence, 510 residues long: UDP-N-acetylmuramoylalanine--D-glutamate ligase (510 aa).

Residue 138–144 coordinates ATP; the sequence is GTNGKTT. The tract at residues 294–316 is disordered; it reads FDEPAPAPRRKKDAPPPTRAGGR.

It belongs to the MurCDEF family.

The protein localises to the cytoplasm. The enzyme catalyses UDP-N-acetyl-alpha-D-muramoyl-L-alanine + D-glutamate + ATP = UDP-N-acetyl-alpha-D-muramoyl-L-alanyl-D-glutamate + ADP + phosphate + H(+). It functions in the pathway cell wall biogenesis; peptidoglycan biosynthesis. Functionally, cell wall formation. Catalyzes the addition of glutamate to the nucleotide precursor UDP-N-acetylmuramoyl-L-alanine (UMA). The sequence is that of UDP-N-acetylmuramoylalanine--D-glutamate ligase from Bordetella bronchiseptica (strain ATCC BAA-588 / NCTC 13252 / RB50) (Alcaligenes bronchisepticus).